A 319-amino-acid chain; its full sequence is Ornithine carbamoyltransferase (319 aa).

Residues S57 to T60, Q84, R108, and H135 to Q138 each bind carbamoyl phosphate. Residues N166, D230, and S234–M235 each bind L-ornithine. Carbamoyl phosphate is bound by residues C270–L271 and R298.

Belongs to the aspartate/ornithine carbamoyltransferase superfamily. OTCase family.

It is found in the cytoplasm. The enzyme catalyses carbamoyl phosphate + L-ornithine = L-citrulline + phosphate + H(+). It functions in the pathway amino-acid biosynthesis; L-arginine biosynthesis; L-arginine from L-ornithine and carbamoyl phosphate: step 1/3. Reversibly catalyzes the transfer of the carbamoyl group from carbamoyl phosphate (CP) to the N(epsilon) atom of ornithine (ORN) to produce L-citrulline. The polypeptide is Ornithine carbamoyltransferase (argF) (Bacillus subtilis (strain 168)).